We begin with the raw amino-acid sequence, 237 residues long: Ribosomal RNA small subunit methyltransferase G (237 aa).

S-adenosyl-L-methionine is bound by residues Gly-79, 130–131 (CE), and Arg-147.

It belongs to the methyltransferase superfamily. RNA methyltransferase RsmG family.

The protein resides in the cytoplasm. Specifically methylates the N7 position of a guanine in 16S rRNA. This is Ribosomal RNA small subunit methyltransferase G from Malacoplasma penetrans (strain HF-2) (Mycoplasma penetrans).